We begin with the raw amino-acid sequence, 760 residues long: Amyloid beta precursor protein binding family B member 2 (760 aa).

Phosphoserine occurs at positions 123 and 160. Disordered regions lie at residues Gln-177–Gly-295 and Pro-324–Trp-351. Polar residues-rich tracts occupy residues Asn-212–Pro-230 and Ser-261–Pro-275. The WW domain occupies Pro-290–Ser-322. Phosphoserine occurs at positions 334, 409, and 412. 2 consecutive PID domains span residues Asp-413–Asp-580 and Thr-586–Asn-738.

In terms of assembly, interacts (via C-terminus) with APP (via C-terminus). Interacts with APLP2 (via cytoplasmic domain). As to expression, expressed in the brain, retinal lens and muscle cells (at protein level).

It localises to the endoplasmic reticulum. It is found in the golgi apparatus. Its subcellular location is the early endosome. Functionally, plays a role in the maintenance of lens transparency, and may also play a role in muscle cell strength. Involved in hippocampal neurite branching and neuromuscular junction formation, as a result plays a role in spatial memory functioning. Activates transcription of APP. This is Amyloid beta precursor protein binding family B member 2 from Mus musculus (Mouse).